Reading from the N-terminus, the 223-residue chain is UPF0441 protein YgiB (223 aa).

The segment covering 178–195 has biased composition (low complexity); it reads TVPKTAMAPKPATTTTVT. Positions 178–223 are disordered; it reads TVPKTAMAPKPATTTTVTRGGFGESIAKQSTMQRSATGTSSRSMGG. Positions 204-223 are enriched in polar residues; sequence AKQSTMQRSATGTSSRSMGG.

It belongs to the UPF0441 family.

This is UPF0441 protein YgiB from Shigella boydii serotype 4 (strain Sb227).